A 163-amino-acid chain; its full sequence is Sorting nexin-3 (163 aa).

Positions 39–162 (VEVRDPRTHF…VRFLQDEVFN (124 aa)) constitute a PX domain. A 1,2-diacyl-sn-glycero-3-phospho-(1D-myo-inositol-3-phosphate) is bound by residues Arg-82, Ser-84, Lys-113, Arg-119, and Arg-128.

The protein belongs to the sorting nexin family.

Its subcellular location is the cytoplasm. It localises to the golgi apparatus membrane. The protein resides in the prevacuolar compartment membrane. In terms of biological role, required for retention of late Golgi membrane proteins. Component of the retrieval machinery that functions by direct interaction with the cytosolic tails of certain TGN membrane proteins during the sorting/budding process at the prevacuolar compartment. Binds phosphatidylinositol 3-phosphate (PtdIns(P3)). The polypeptide is Sorting nexin-3 (SNX3) (Eremothecium gossypii (strain ATCC 10895 / CBS 109.51 / FGSC 9923 / NRRL Y-1056) (Yeast)).